Here is a 217-residue protein sequence, read N- to C-terminus: Uracil-DNA glycosylase (217 aa).

Aspartate 62 functions as the Proton acceptor in the catalytic mechanism.

Belongs to the uracil-DNA glycosylase (UDG) superfamily. UNG family.

Its subcellular location is the cytoplasm. The enzyme catalyses Hydrolyzes single-stranded DNA or mismatched double-stranded DNA and polynucleotides, releasing free uracil.. Its function is as follows. Excises uracil residues from the DNA which can arise as a result of misincorporation of dUMP residues by DNA polymerase or due to deamination of cytosine. This chain is Uracil-DNA glycosylase, found in Streptococcus gordonii (strain Challis / ATCC 35105 / BCRC 15272 / CH1 / DL1 / V288).